We begin with the raw amino-acid sequence, 469 residues long: MSHPSGLRSSVSSTSYRRTFGPPPSLSPGAFSYSSSSRFSSSRLLGSASPGSSVRLGSFRGPRAGTGALLRLPSERLDFSMAEALNQEFLATRSNEKQELQELNDRFANFIEKVRFLEQQNAALRGELNQARGQEPARADQLCQQELRELRRELELLGRERDRVQVERDGLAEDLAALKQRLEEETRKREDAEHNLVLFRKDVDDATLSRLELERKIESLMDEIEFLKKLHEEELRDLQLSVESQQVQHVEVEATVKPELTAALRDIRAQYESIAAKNLQEAEEWYKSKYADLSDAANRNHEALRQAKQEMNESRRQIQSLTCEVDGLRGTNEALLRQLRELEEQFALEAGGYQAGAARLEEELRQLKEEMARHLREYQELLNVKMALDIEIATYRKLLEGEESRISVPVHSFASLSIKTTVPEVEPPQETHSRKMVLIRTIETRDGEQVVTESQKEQHSELDKSPQSY.

Low complexity-rich tracts occupy residues 1–18 (MSHP…SYRR) and 27–53 (SPGA…PGSS). The interval 1–60 (MSHPSGLRSSVSSTSYRRTFGPPPSLSPGAFSYSSSSRFSSSRLLGSASPGSSVRLGSFR) is disordered. A head region spans residues 1-98 (MSHPSGLRSS…FLATRSNEKQ (98 aa)). A 3'-nitrotyrosine modification is found at Tyr-16. 3 positions are modified to phosphoserine: Ser-27, Ser-49, and Ser-58. An IF rod domain is found at 96-406 (EKQELQELND…KLLEGEESRI (311 aa)). Positions 99–131 (ELQELNDRFANFIEKVRFLEQQNAALRGELNQA) are coil 1A. The interval 132–142 (RGQEPARADQL) is linker 1. The interval 143-238 (CQQELRELRR…KLHEEELRDL (96 aa)) is coil 1B. A linker 2 region spans residues 239–261 (QLSVESQQVQHVEVEATVKPELT). Residues 262–404 (AALRDIRAQY…YRKLLEGEES (143 aa)) form a coil 2 region. Tyr-378 carries the post-translational modification 3'-nitrotyrosine. The segment at 405–469 (RISVPVHSFA…SELDKSPQSY (65 aa)) is tail. The tract at residues 447–469 (GEQVVTESQKEQHSELDKSPQSY) is disordered. Tyr-469 is subject to Phosphotyrosine.

It belongs to the intermediate filament family. As to quaternary structure, forms homodimers (in vitro). Homopolymerizes into a filamentous network (in vitro). Forms heterodimers with NEFL, NEFM or NEFH (in vitro). Interacts with DST (via C-terminus). Interacts with RAB7A; the interaction is direct. Interacts with PRKCE (via phorbol-ester/DAG-type 2 domain). Post-translationally, phosphorylated; phosphorylation increases after nerve injury in regenerating neurons.

It is found in the cytoplasm. The protein localises to the cytoskeleton. It localises to the cell projection. Its subcellular location is the axon. The protein resides in the perikaryon. Class-III neuronal intermediate filament protein. May form an independent structural network without the involvement of other neurofilaments or may cooperate with the neuronal intermediate filament proteins NEFL, NEFH, NEFM and INA to form a filamentous network. Assembly of the neuronal intermediate filaments may be regulated by RAB7A. Plays a role in the development of unmyelinated sensory neurons. May be involved in axon elongation and axon regeneration after injury. Inhibits neurite extension in type II spiral ganglion neurons in the cochlea. In Bos taurus (Bovine), this protein is Peripherin (PRPH).